The primary structure comprises 342 residues: Ribosomal RNA small subunit methyltransferase C (342 aa).

Belongs to the methyltransferase superfamily. RsmC family. As to quaternary structure, monomer.

It is found in the cytoplasm. The enzyme catalyses guanosine(1207) in 16S rRNA + S-adenosyl-L-methionine = N(2)-methylguanosine(1207) in 16S rRNA + S-adenosyl-L-homocysteine + H(+). In terms of biological role, specifically methylates the guanine in position 1207 of 16S rRNA in the 30S particle. This is Ribosomal RNA small subunit methyltransferase C from Klebsiella pneumoniae subsp. pneumoniae (strain ATCC 700721 / MGH 78578).